A 377-amino-acid polypeptide reads, in one-letter code: uncharacterized protein (377 aa).

2 helical membrane-spanning segments follow: residues 23–43 (LKFI…FIAY) and 251–271 (GSFI…SISY).

It is found in the cell membrane. This is an uncharacterized protein from Methanocaldococcus jannaschii (strain ATCC 43067 / DSM 2661 / JAL-1 / JCM 10045 / NBRC 100440) (Methanococcus jannaschii).